A 438-amino-acid polypeptide reads, in one-letter code: Phospholipase D Y (438 aa).

Residues Met1–Ser19 form the signal peptide. Asn50 carries an N-linked (GlcNAc...) asparagine glycan. The PLD phosphodiesterase 1 domain maps to Gly145–Ser172. Residues His150, Lys152, and Asp157 contribute to the active site. N-linked (GlcNAc...) asparagine glycans are attached at residues Asn223, Asn336, and Asn394. The PLD phosphodiesterase 2 domain occupies Tyr373–Tyr399.

It belongs to the phospholipase D family.

The enzyme catalyses a 1,2-diacyl-sn-glycero-3-phosphocholine + H2O = a 1,2-diacyl-sn-glycero-3-phosphate + choline + H(+). Inhibited by butan-1-ol. Functionally, hydrolyzes membrane phospholipids, such as PtdCho (phosphatidylcholine), producing the free headgroup and PtdOH (phosphatidic acid; signaling molecule on its own). This Dictyostelium discoideum (Social amoeba) protein is Phospholipase D Y (pldY).